Reading from the N-terminus, the 170-residue chain is ATP synthase subunit b (170 aa).

The helical transmembrane segment at 5-25 threads the bilayer; sequence YFIPCLLLPTMMLASGGGGET.

This sequence belongs to the ATPase B chain family. In terms of assembly, F-type ATPases have 2 components, F(1) - the catalytic core - and F(0) - the membrane proton channel. F(1) has five subunits: alpha(3), beta(3), gamma(1), delta(1), epsilon(1). F(0) has three main subunits: a(1), b(2) and c(10-14). The alpha and beta chains form an alternating ring which encloses part of the gamma chain. F(1) is attached to F(0) by a central stalk formed by the gamma and epsilon chains, while a peripheral stalk is formed by the delta and b chains.

It localises to the cell inner membrane. Functionally, f(1)F(0) ATP synthase produces ATP from ADP in the presence of a proton or sodium gradient. F-type ATPases consist of two structural domains, F(1) containing the extramembraneous catalytic core and F(0) containing the membrane proton channel, linked together by a central stalk and a peripheral stalk. During catalysis, ATP synthesis in the catalytic domain of F(1) is coupled via a rotary mechanism of the central stalk subunits to proton translocation. Component of the F(0) channel, it forms part of the peripheral stalk, linking F(1) to F(0). In Wolinella succinogenes (strain ATCC 29543 / DSM 1740 / CCUG 13145 / JCM 31913 / LMG 7466 / NCTC 11488 / FDC 602W) (Vibrio succinogenes), this protein is ATP synthase subunit b.